The chain runs to 94 residues: 2S albumin-like cysteine protease inhibitor (94 aa).

Disulfide bonds link Cys12-Cys35, Cys36-Cys82, and Cys48-Cys89.

The protein belongs to the 2S seed storage albumins family. As to expression, expressed in seeds (at protein level).

Cysteine protease inhibitor that likely functions in defense against insects by inhibiting cysteine proteases in the midgut of herbivore insects such as C.maculatus. Selectively inhibits cathepsin L, as well as papain, ficin and bromelain with lower efficiency. Shows antitumor activity, inhibiting the growth of prostate cancer cell lines PC3 and DU145, and the gastric cancer cell line Hs746T. No activity against cathepsin B or serine proteases (trypsin, human plasma kallikrein and elastase). The polypeptide is 2S albumin-like cysteine protease inhibitor (Araucaria angustifolia (Brazilian pine tree)).